A 219-amino-acid chain; its full sequence is Ribosome hibernation promotion factor (219 aa).

This sequence belongs to the HPF/YfiA ribosome-associated protein family. Long HPF subfamily. As to quaternary structure, interacts with 100S ribosomes.

The protein localises to the cytoplasm. In terms of biological role, required for dimerization of active 70S ribosomes into 100S ribosomes in stationary phase; 100S ribosomes are translationally inactive and sometimes present during exponential growth. The polypeptide is Ribosome hibernation promotion factor (Mycobacterium tuberculosis (strain ATCC 25618 / H37Rv)).